A 367-amino-acid polypeptide reads, in one-letter code: CCN family member 4 (367 aa).

The first 22 residues, 1–22 (MRWFLPWTLAAVTAAAASTVLA), serve as a signal peptide directing secretion. Residues 45-118 (RPQFCKWPCE…RYAIGVCAQV (74 aa)) form the IGFBP N-terminal domain. 4 cysteine pairs are disulfide-bonded: Cys49-Cys73, Cys53-Cys75, Cys55-Cys76, and Cys62-Cys79. Asn86 is a glycosylation site (N-linked (GlcNAc...) asparagine). 2 disulfide bridges follow: Cys87–Cys101 and Cys93–Cys115. The VWFC domain occupies 121–186 (VGCVLDGVRY…GHCCEQWVCE (66 aa)). N-linked (GlcNAc...) asparagine glycosylation occurs at Asn143. Residues 215-260 (NCIAYTSPWSPCSTSCGLGVSTRISNVNAQCWPEQESRLCNLRPCD) form the TSP type-1 domain. Cystine bridges form between Cys273/Cys310, Cys290/Cys324, Cys301/Cys340, Cys304/Cys342, and Cys309/Cys346. A CTCK domain is found at 273–347 (CLAVYQPEAS…NACFCNLSCR (75 aa)). An N-linked (GlcNAc...) asparagine glycan is attached at Asn284. An N-linked (GlcNAc...) asparagine glycan is attached at Asn343.

It belongs to the CCN family. Expressed in heart, kidney, lung, pancreas, placenta, ovary, small intestine and spleen. Isoform 2 is expressed predominantly in scirrhous gastric carcinoma and, weakly in placenta. Overexpression is associated with several cancers including breast cancer and colon tumors. Isoform 2 is overexpressed in scirrhous gastric carcinoma.

Its subcellular location is the secreted. Downstream regulator in the Wnt/Frizzled-signaling pathway. Associated with cell survival. Attenuates p53-mediated apoptosis in response to DNA damage through activation of AKT kinase. Up-regulates the anti-apoptotic Bcl-X(L) protein. Adheres to skin and melanoma fibroblasts. In vitro binding to skin fibroblasts occurs through the proteoglycans, decorin and biglycan. The protein is CCN family member 4 of Homo sapiens (Human).